Consider the following 429-residue polypeptide: Histidinol dehydrogenase (429 aa).

Positions 130, 191, and 214 each coordinate NAD(+). Substrate contacts are provided by serine 237, glutamine 259, and histidine 262. Zn(2+) is bound by residues glutamine 259 and histidine 262. Catalysis depends on proton acceptor residues glutamate 327 and histidine 328. Substrate contacts are provided by histidine 328, aspartate 361, glutamate 415, and histidine 420. Aspartate 361 lines the Zn(2+) pocket. Histidine 420 is a Zn(2+) binding site.

This sequence belongs to the histidinol dehydrogenase family. Zn(2+) serves as cofactor.

It carries out the reaction L-histidinol + 2 NAD(+) + H2O = L-histidine + 2 NADH + 3 H(+). It functions in the pathway amino-acid biosynthesis; L-histidine biosynthesis; L-histidine from 5-phospho-alpha-D-ribose 1-diphosphate: step 9/9. Its function is as follows. Catalyzes the sequential NAD-dependent oxidations of L-histidinol to L-histidinaldehyde and then to L-histidine. This is Histidinol dehydrogenase from Nitrobacter winogradskyi (strain ATCC 25391 / DSM 10237 / CIP 104748 / NCIMB 11846 / Nb-255).